Reading from the N-terminus, the 342-residue chain is Metalloendoproteinase 4-MMP (342 aa).

The N-terminal stretch at 1–34 is a signal peptide; the sequence is MHHHHHPCNRKPFTTIFSFFLLYLNLHNQQIIEA. Residues 35-124 constitute a propeptide, activation peptide; the sequence is RNPSQFTTNP…KTAPFHTGKK (90 aa). The Cysteine switch signature appears at 104–111; that stretch reads PRCGFPDD. 2 residues coordinate Zn(2+): Cys-106 and His-252. Glu-253 is an active-site residue. Residues His-256 and His-262 each contribute to the Zn(2+) site. Asn-300 carries N-linked (GlcNAc...) asparagine glycosylation. Asp-317 carries GPI-anchor amidated aspartate lipidation. Positions 318–342 are cleaved as a propeptide — removed in mature form; that stretch reads GSRIRSQGMIYSTLSTVIALCFLNW.

It belongs to the peptidase M10A family. Matrix metalloproteinases (MMPs) subfamily. It depends on Zn(2+) as a cofactor. Mostly expressed in flowers and stems, and, to a lower extent, in leaves and roots.

It localises to the cell membrane. Its activity is regulated as follows. Repressed by acetohydroxamic acid (AHA). Matrix metalloproteinases (MMPs) or matrixins may play a role in the degradation and remodeling of the extracellular matrix (ECM) during development or in response to stresses. Active on myelin basic protein (MBP) and, to some extent, on McaPLGLDpaAR-NH(2) (QF24) and beta-casein. The polypeptide is Metalloendoproteinase 4-MMP (Arabidopsis thaliana (Mouse-ear cress)).